A 273-amino-acid chain; its full sequence is MTTVSTAAASGPAVPPPRIDPDVPAKVAARNLNFYYGQHHALKNINLSIAANRVTAFIGPSGCGKSTLLRIFNRMYDLYPGQRVEGRVLLDDTDILDPKLDLNLLRARVGMVFQKPTPFPMTIYENIAFGIRLYEKLPKSEMDSRVEKALRDGALWTEVKDKLNASGLSLSGGQQQRLCIARTVAVRPEVILFDEPCSALDPISTAKVEELIDELKTHYTIAIVTHNMQQAARVSDYTSFMYLGEMIEFGPTDKLFTSPSDRRTQDYITGRFG.

Residues 1-20 form a disordered region; the sequence is MTTVSTAAASGPAVPPPRID. An ABC transporter domain is found at 27–268; the sequence is VAARNLNFYY…PSDRRTQDYI (242 aa). 59-66 serves as a coordination point for ATP; that stretch reads GPSGCGKS.

Belongs to the ABC transporter superfamily. Phosphate importer (TC 3.A.1.7) family. The complex is composed of two ATP-binding proteins (PstB), two transmembrane proteins (PstC and PstA) and a solute-binding protein (PstS).

The protein localises to the cell inner membrane. It catalyses the reaction phosphate(out) + ATP + H2O = ADP + 2 phosphate(in) + H(+). Its function is as follows. Part of the ABC transporter complex PstSACB involved in phosphate import. Responsible for energy coupling to the transport system. This Nitrobacter winogradskyi (strain ATCC 25391 / DSM 10237 / CIP 104748 / NCIMB 11846 / Nb-255) protein is Phosphate import ATP-binding protein PstB.